The primary structure comprises 1058 residues: Protein translocase subunit SECA2, chloroplastic (1058 aa).

The transit peptide at 1–58 (MGSVSNLVSPNICHPAPPCLTSRSNKFPWTKPISGLLFYRSVTPIKRCHLVRRSCVVS) directs the protein to the chloroplast. Position 167-174 (167-174 (MKTGEGKT)) interacts with ATP.

It belongs to the SecA family. In terms of assembly, part of a second Sec protein translocation apparatus. Interacts probably with SCY2.

The protein localises to the plastid. Its subcellular location is the chloroplast membrane. The enzyme catalyses ATP + H2O + chloroplast-proteinSide 1 = ADP + phosphate + chloroplast-proteinSide 2.. Functionally, involved in protein export. Probably interacts with other proteins to allow the postimport or conservative sorting pathway for inner membrane proteins in plastids. May have a central role in coupling the hydrolysis of ATP to the transfer of proteins across the membrane. The chain is Protein translocase subunit SECA2, chloroplastic from Arabidopsis thaliana (Mouse-ear cress).